Here is a 333-residue protein sequence, read N- to C-terminus: Phosphate acyltransferase (333 aa).

It belongs to the PlsX family. Homodimer. Probably interacts with PlsY.

It is found in the cytoplasm. It catalyses the reaction a fatty acyl-[ACP] + phosphate = an acyl phosphate + holo-[ACP]. It participates in lipid metabolism; phospholipid metabolism. Functionally, catalyzes the reversible formation of acyl-phosphate (acyl-PO(4)) from acyl-[acyl-carrier-protein] (acyl-ACP). This enzyme utilizes acyl-ACP as fatty acyl donor, but not acyl-CoA. This chain is Phosphate acyltransferase, found in Lactobacillus helveticus (strain DPC 4571).